A 248-amino-acid polypeptide reads, in one-letter code: Triosephosphate isomerase (248 aa).

Substrate contacts are provided by asparagine 11 and lysine 13. Histidine 95 functions as the Electrophile in the catalytic mechanism. Glutamate 165 serves as the catalytic Proton acceptor.

It belongs to the triosephosphate isomerase family. In terms of assembly, homodimer.

Its subcellular location is the cytoplasm. The catalysed reaction is dihydroxyacetone phosphate = methylglyoxal + phosphate. The enzyme catalyses D-glyceraldehyde 3-phosphate = dihydroxyacetone phosphate. It participates in carbohydrate degradation; glycolysis; D-glyceraldehyde 3-phosphate from glycerone phosphate: step 1/1. Its pathway is carbohydrate biosynthesis; gluconeogenesis. In terms of biological role, triosephosphate isomerase is an extremely efficient metabolic enzyme that catalyzes the interconversion between dihydroxyacetone phosphate (DHAP) and D-glyceraldehyde-3-phosphate (G3P) in glycolysis and gluconeogenesis. Its function is as follows. It is also responsible for the non-negligible production of methylglyoxal a reactive cytotoxic side-product that modifies and can alter proteins, DNA and lipids. The chain is Triosephosphate isomerase (tpi1) from Xenopus laevis (African clawed frog).